Here is a 38-residue protein sequence, read N- to C-terminus: Large ribosomal subunit protein bL36 (38 aa).

This sequence belongs to the bacterial ribosomal protein bL36 family.

The chain is Large ribosomal subunit protein bL36 from Cellvibrio japonicus (strain Ueda107) (Pseudomonas fluorescens subsp. cellulosa).